The chain runs to 125 residues: Glycine cleavage system H protein (125 aa).

The 83-residue stretch at Gly-19–Thr-101 folds into the Lipoyl-binding domain. Lys-60 bears the N6-lipoyllysine mark.

The protein belongs to the GcvH family. In terms of assembly, the glycine cleavage system is composed of four proteins: P, T, L and H. (R)-lipoate is required as a cofactor.

Its function is as follows. The glycine cleavage system catalyzes the degradation of glycine. The H protein shuttles the methylamine group of glycine from the P protein to the T protein. This chain is Glycine cleavage system H protein, found in Methylocella silvestris (strain DSM 15510 / CIP 108128 / LMG 27833 / NCIMB 13906 / BL2).